The following is a 312-amino-acid chain: MLLVKMTTTIFYADDLLQALQQAKAEKNFSSVFSLDWDKLRIAKRNTSVKYVTVNVTVKGKKAPLMFSFQNEKHVGTIPPSTDEEVIRMNAENPKFLVKRRDRDPCLQFNKYKISPPLEDDGLTVKKNEQGEEIYPGDEEKSKLFQIIELLEEAFEDAVQKGPETMKTKNIIKLVQRKISSSAIKNADKPLPNPIARIRIKVNPTTTMLAPILLDKNKPITLQNGKTSFEELKDEDGTKANPDNIHKLIESHSIHDGIINARSICISNMGISFPLCLEMGVVKVFEKNNGIDVDSIYGSDDITNLINQVAIA.

The protein belongs to the asfivirus CP312R family.

It is found in the virion. This is an uncharacterized protein from African swine fever virus (isolate Tick/Malawi/Lil 20-1/1983) (ASFV).